Consider the following 281-residue polypeptide: Phosphonates import ATP-binding protein PhnC 2 (281 aa).

Residues 4–238 (LTVDNVTKTY…LVDDLYGNVE (235 aa)) enclose the ABC transporter domain. 35-42 (GESGAGKS) is a binding site for ATP. The tract at residues 243–281 (ATDNSDNSTVDTSDGTRYDTETGSDGTDEVDVIGRQVES) is disordered. The span at 244-255 (TDNSDNSTVDTS) shows a compositional bias: low complexity.

It belongs to the ABC transporter superfamily. Phosphonates importer (TC 3.A.1.9.1) family. The complex is composed of two ATP-binding proteins (PhnC), two transmembrane proteins (PhnE) and a solute-binding protein (PhnD).

The protein localises to the cell membrane. It catalyses the reaction phosphonate(out) + ATP + H2O = phosphonate(in) + ADP + phosphate + H(+). In terms of biological role, part of the ABC transporter complex PhnCDE involved in phosphonates import. Responsible for energy coupling to the transport system. The polypeptide is Phosphonates import ATP-binding protein PhnC 2 (Haloquadratum walsbyi (strain DSM 16790 / HBSQ001)).